The primary structure comprises 261 residues: Indole-3-glycerol phosphate synthase (261 aa).

The protein belongs to the TrpC family.

The enzyme catalyses 1-(2-carboxyphenylamino)-1-deoxy-D-ribulose 5-phosphate + H(+) = (1S,2R)-1-C-(indol-3-yl)glycerol 3-phosphate + CO2 + H2O. It functions in the pathway amino-acid biosynthesis; L-tryptophan biosynthesis; L-tryptophan from chorismate: step 4/5. This chain is Indole-3-glycerol phosphate synthase, found in Burkholderia cenocepacia (strain HI2424).